We begin with the raw amino-acid sequence, 62 residues long: Large ribosomal subunit protein bL28 (62 aa).

This sequence belongs to the bacterial ribosomal protein bL28 family.

The chain is Large ribosomal subunit protein bL28 from Caldicellulosiruptor bescii (strain ATCC BAA-1888 / DSM 6725 / KCTC 15123 / Z-1320) (Anaerocellum thermophilum).